The sequence spans 379 residues: Cytochrome b (379 aa).

4 consecutive transmembrane segments (helical) span residues 34–54, 78–100, 113–133, and 179–199; these read YGSLLGITLVFQIMTGIMLAM, WMIRFFHGNGASFFFICLYVHIG, TWNIGIIILLLTMATAFLGYV, and FFSLHFLLPFIISAMVMIHLL. Heme b-binding residues include His-84 and His-98. 2 residues coordinate heme b: His-183 and His-197. His-202 is a binding site for a ubiquinone. 4 helical membrane-spanning segments follow: residues 225–245, 289–309, 320–340, and 345–365; these read FSIKDLITMMLFIMILSFLVL, LGGVIALLMSIMILFFLPIFS, WSGMIFWSFINIIILLTWIGA, and APYIIFGQILSVLYFLTFFWM.

Belongs to the cytochrome b family. In terms of assembly, the main subunits of complex b-c1 are: cytochrome b, cytochrome c1 and the Rieske protein. Heme b is required as a cofactor.

The protein resides in the mitochondrion inner membrane. Component of the ubiquinol-cytochrome c reductase complex (complex III or cytochrome b-c1 complex) that is part of the mitochondrial respiratory chain. The b-c1 complex mediates electron transfer from ubiquinol to cytochrome c. Contributes to the generation of a proton gradient across the mitochondrial membrane that is then used for ATP synthesis. The polypeptide is Cytochrome b (mt:Cyt-b) (Epiperipatus biolleyi (Velvet worm)).